Here is a 391-residue protein sequence, read N- to C-terminus: 8-amino-7-oxononanoate synthase 1 (391 aa).

108-109 (GF) serves as a coordination point for pyridoxal 5'-phosphate. Histidine 133 is a binding site for substrate. Pyridoxal 5'-phosphate is bound by residues serine 180, 205 to 208 (DDAH), and 236 to 239 (TLSK). Lysine 239 is subject to N6-(pyridoxal phosphate)lysine. Threonine 353 is a substrate binding site.

Belongs to the class-II pyridoxal-phosphate-dependent aminotransferase family. BioF subfamily. Homodimer. Pyridoxal 5'-phosphate serves as cofactor.

The enzyme catalyses 6-carboxyhexanoyl-[ACP] + L-alanine + H(+) = (8S)-8-amino-7-oxononanoate + holo-[ACP] + CO2. It participates in cofactor biosynthesis; biotin biosynthesis. Functionally, catalyzes the decarboxylative condensation of pimeloyl-[acyl-carrier protein] and L-alanine to produce 8-amino-7-oxononanoate (AON), [acyl-carrier protein], and carbon dioxide. This Bacillus velezensis (strain DSM 23117 / BGSC 10A6 / LMG 26770 / FZB42) (Bacillus amyloliquefaciens subsp. plantarum) protein is 8-amino-7-oxononanoate synthase 1.